Consider the following 303-residue polypeptide: GMP synthase [glutamine-hydrolyzing] subunit B (303 aa).

A GMPS ATP-PPase domain is found at 1–183; the sequence is MDVEKFVENA…LGLPKEISER (183 aa). 28-34 is a binding site for ATP; that stretch reads SGGVDSS.

Heterodimer composed of a glutamine amidotransferase subunit (A) and a GMP-binding subunit (B).

It catalyses the reaction XMP + L-glutamine + ATP + H2O = GMP + L-glutamate + AMP + diphosphate + 2 H(+). It functions in the pathway purine metabolism; GMP biosynthesis; GMP from XMP (L-Gln route): step 1/1. In terms of biological role, catalyzes the synthesis of GMP from XMP. This chain is GMP synthase [glutamine-hydrolyzing] subunit B (guaAB), found in Archaeoglobus fulgidus (strain ATCC 49558 / DSM 4304 / JCM 9628 / NBRC 100126 / VC-16).